We begin with the raw amino-acid sequence, 441 residues long: Arginine biosynthesis bifunctional protein ArgJ, mitochondrial (441 aa).

Positions 177, 204, 215, 301, 436, and 441 each coordinate substrate. The Nucleophile role is filled by threonine 215.

It belongs to the ArgJ family. In terms of assembly, heterodimer of an alpha and a beta chain. The alpha and beta chains are autoproteolytically processed from a single precursor protein within the mitochondrion.

The protein resides in the mitochondrion matrix. The catalysed reaction is N(2)-acetyl-L-ornithine + L-glutamate = N-acetyl-L-glutamate + L-ornithine. It carries out the reaction L-glutamate + acetyl-CoA = N-acetyl-L-glutamate + CoA + H(+). It participates in amino-acid biosynthesis; L-arginine biosynthesis; L-ornithine and N-acetyl-L-glutamate from L-glutamate and N(2)-acetyl-L-ornithine (cyclic): step 1/1. The protein operates within amino-acid biosynthesis; L-arginine biosynthesis; N(2)-acetyl-L-ornithine from L-glutamate: step 1/4. Functionally, catalyzes two activities which are involved in the cyclic version of arginine biosynthesis: the synthesis of acetylglutamate from glutamate and acetyl-CoA, and of ornithine by transacetylation between acetylornithine and glutamate. This Kluyveromyces lactis (strain ATCC 8585 / CBS 2359 / DSM 70799 / NBRC 1267 / NRRL Y-1140 / WM37) (Yeast) protein is Arginine biosynthesis bifunctional protein ArgJ, mitochondrial.